The following is a 253-amino-acid chain: Tetraspanin-11 (253 aa).

A run of 3 helical transmembrane segments spans residues 19-39, 63-83, and 93-113; these read LLFI…AVGI, ILIF…GAII, and YFCL…LAHV. N-linked (GlcNAc...) asparagine glycosylation is present at asparagine 127. The helical transmembrane segment at 220-240 threads the bilayer; the sequence is LLLMGAVGIGVACLQICGMVL.

Belongs to the tetraspanin (TM4SF) family.

The protein localises to the membrane. The sequence is that of Tetraspanin-11 (Tspan11) from Mus musculus (Mouse).